The sequence spans 114 residues: Protachykinin (114 aa).

Residues 1–19 (MKFLLPSIVIFLVLCQVFG) form the signal peptide. The propeptide occupies 20 to 55 (EELGPKEDLDYWTGSNQVQDEWLQADPFREIIRRMT). Met67 and Met91 each carry methionine amide.

Belongs to the tachykinin family. Expressed in all parts of the brain, with robust expression in the olfactory bulbs and tracts, moderate expression in the hypothalamus and posterior brain, and weak expression in the telencephalon-preoptic region and optic tectum-thalamus. Also expressed in nerve fibers, intestine, testes and pituitary gland. Not expressed in the liver or kidneys.

Its subcellular location is the secreted. Tachykinins are active peptides which excite neurons, evoke behavioral responses, are potent vasodilators and secretagogues, and contract (directly or indirectly) many smooth muscles. Functionally, substance P produces a voltage-dependent inhibition of calcium current in retinal bipolar cells. It can enhance learning and memory, may regulate social approach and feeding behaviors, and can accelerate the functional recovery in postural balance in response to light after unilateral labyrinthectomy. This is Protachykinin from Carassius auratus (Goldfish).